A 374-amino-acid polypeptide reads, in one-letter code: Quinolinate synthase (374 aa).

Iminosuccinate is bound by residues histidine 53 and serine 70. Cysteine 116 lines the [4Fe-4S] cluster pocket. Residues 148 to 150 (YMN) and serine 169 contribute to the iminosuccinate site. [4Fe-4S] cluster is bound at residue cysteine 236. Iminosuccinate-binding positions include 262–264 (HPE) and threonine 279. Residue cysteine 327 participates in [4Fe-4S] cluster binding.

It belongs to the quinolinate synthase family. Type 3 subfamily. [4Fe-4S] cluster is required as a cofactor.

The protein resides in the cytoplasm. It carries out the reaction iminosuccinate + dihydroxyacetone phosphate = quinolinate + phosphate + 2 H2O + H(+). It functions in the pathway cofactor biosynthesis; NAD(+) biosynthesis; quinolinate from iminoaspartate: step 1/1. Catalyzes the condensation of iminoaspartate with dihydroxyacetone phosphate to form quinolinate. This is Quinolinate synthase from Halobacterium salinarum (strain ATCC 29341 / DSM 671 / R1).